The following is a 308-amino-acid chain: MAGKKNVLSSLAVYAEDSEPESDGEAGIEAVGSAAEEKGGLVSDAYGEDDFSRLGGDEDGYEEEEDENSRQSEDDDSETEKPEADDPKDNTEAEKRDPQELVASFSERVRNMSPDEIKIPPEPPGRCSNHLQDKIQKLYERKIKEGMDMNYIIQRKKEFRNPSIYEKLIQFCAIDELGTNYPKDMFDPHGWSEDSYYEALAKAQKIEMDKLEKAKKERTKIEFVTGTKKGTTTNATSTTTTTASTAVADAQKRKSKWDSAIPVTTIAQPTILTTTATLPAVVTVTTSASGSKTTVISAVGTIVKKAKQ.

Residues 15-101 (AEDSEPESDG…EAEKRDPQEL (87 aa)) are disordered. Over residues 16-26 (EDSEPESDGEA) the composition is skewed to acidic residues. Serine 18, serine 22, serine 43, and serine 52 each carry phosphoserine. Residues 57-78 (DEDGYEEEEDENSRQSEDDDSE) are compositionally biased toward acidic residues. A compositionally biased stretch (basic and acidic residues) spans 79–99 (TEKPEADDPKDNTEAEKRDPQ). Lysine 95 is covalently cross-linked (Glycyl lysine isopeptide (Lys-Gly) (interchain with G-Cter in SUMO2)). Serine 113 carries the post-translational modification Phosphoserine. Glycyl lysine isopeptide (Lys-Gly) (interchain with G-Cter in SUMO2) cross-links involve residues lysine 220, lysine 304, and lysine 305.

This sequence belongs to the HCNGP family. As to quaternary structure, interacts with histone deacetylase complex subunit SAP30.

The protein localises to the nucleus. Functionally, plays a role in transcriptional repression by promoting histone deacetylase activity, leading to deacetylation of histone H3. May be involved in the regulation of beta-2-microglobulin genes. Its function is as follows. (Microbial infection) Involved in transcriptional repression of HHV-1 genes TK and gC. This is SAP30-binding protein from Homo sapiens (Human).